Consider the following 236-residue polypeptide: Class B acid phosphatase (236 aa).

The N-terminal stretch at 1–22 (MKNVMKLSVIALLTAAAVPAMA) is a signal peptide. The active-site Nucleophile is Asp67. Residues Asp67 and Asp69 each contribute to the Mg(2+) site. Residue Asp69 is the Proton donor of the active site. Substrate is bound by residues 136–137 (TG) and Lys176. Residue Asp191 coordinates Mg(2+).

The protein belongs to the class B bacterial acid phosphatase family. In terms of assembly, homotetramer. Mg(2+) serves as cofactor.

The protein localises to the periplasm. The enzyme catalyses a phosphate monoester + H2O = an alcohol + phosphate. Dephosphorylates several organic phosphate monoesters. Also has a phosphotransferase activity catalyzing the transfer of low-energy phosphate groups from organic phosphate monoesters to free hydroxyl groups of various organic compounds. This Haemophilus influenzae (strain ATCC 51907 / DSM 11121 / KW20 / Rd) protein is Class B acid phosphatase (aphA).